Consider the following 253-residue polypeptide: DNA repair protein RecO (253 aa).

This sequence belongs to the RecO family.

Involved in DNA repair and RecF pathway recombination. This is DNA repair protein RecO from Symbiobacterium thermophilum (strain DSM 24528 / JCM 14929 / IAM 14863 / T).